Here is a 171-residue protein sequence, read N- to C-terminus: S-ribosylhomocysteine lyase (171 aa).

Fe cation is bound by residues histidine 54, histidine 58, and cysteine 128.

It belongs to the LuxS family. As to quaternary structure, homodimer. It depends on Fe cation as a cofactor.

It catalyses the reaction S-(5-deoxy-D-ribos-5-yl)-L-homocysteine = (S)-4,5-dihydroxypentane-2,3-dione + L-homocysteine. Functionally, involved in the synthesis of autoinducer 2 (AI-2) which is secreted by bacteria and is used to communicate both the cell density and the metabolic potential of the environment. The regulation of gene expression in response to changes in cell density is called quorum sensing. Catalyzes the transformation of S-ribosylhomocysteine (RHC) to homocysteine (HC) and 4,5-dihydroxy-2,3-pentadione (DPD). This chain is S-ribosylhomocysteine lyase, found in Citrobacter koseri (strain ATCC BAA-895 / CDC 4225-83 / SGSC4696).